Consider the following 659-residue polypeptide: Biosynthetic arginine decarboxylase 2 (659 aa).

N6-(pyridoxal phosphate)lysine is present on K119. 311-321 (LNVGGGLAVDY) provides a ligand contact to substrate.

Belongs to the Orn/Lys/Arg decarboxylase class-II family. SpeA subfamily. It depends on Mg(2+) as a cofactor. Pyridoxal 5'-phosphate serves as cofactor.

It carries out the reaction L-arginine + H(+) = agmatine + CO2. Its function is as follows. Catalyzes the biosynthesis of agmatine from arginine. This Synechocystis sp. (strain ATCC 27184 / PCC 6803 / Kazusa) protein is Biosynthetic arginine decarboxylase 2 (speA2).